The chain runs to 84 residues: Three-finger toxin 3FTx-1 (84 aa).

The N-terminal stretch at Met1 to Ser21 is a signal peptide. 4 disulfides stabilise this stretch: Cys24–Cys41, Cys34–Cys59, Cys63–Cys71, and Cys72–Cys77. N-linked (GlcNAc...) asparagine glycosylation occurs at Asn78.

This sequence belongs to the three-finger toxin family. Short-chain subfamily. In terms of tissue distribution, expressed by the venom gland.

Its subcellular location is the secreted. This Micrurus corallinus (Brazilian coral snake) protein is Three-finger toxin 3FTx-1.